The primary structure comprises 161 residues: Phosphopantetheine adenylyltransferase (161 aa).

T9 contributes to the substrate binding site. Residues 9–10 and H17 each bind ATP; that span reads TF. 3 residues coordinate substrate: K41, L73, and R87. ATP contacts are provided by residues 88–90, E98, and 123–129; these read GLR and YQFISGT.

The protein belongs to the bacterial CoaD family. Homohexamer. It depends on Mg(2+) as a cofactor.

The protein localises to the cytoplasm. The enzyme catalyses (R)-4'-phosphopantetheine + ATP + H(+) = 3'-dephospho-CoA + diphosphate. Its pathway is cofactor biosynthesis; coenzyme A biosynthesis; CoA from (R)-pantothenate: step 4/5. Reversibly transfers an adenylyl group from ATP to 4'-phosphopantetheine, yielding dephospho-CoA (dPCoA) and pyrophosphate. The polypeptide is Phosphopantetheine adenylyltransferase (Cupriavidus metallidurans (strain ATCC 43123 / DSM 2839 / NBRC 102507 / CH34) (Ralstonia metallidurans)).